Reading from the N-terminus, the 491-residue chain is Trypanothione reductase (491 aa).

35-51 serves as a coordination point for FAD; sequence DLQKHHGPPHYAALGGT. Cys52 and Cys57 are oxidised to a cystine. Catalysis depends on His461, which acts as the Proton acceptor.

This sequence belongs to the class-I pyridine nucleotide-disulfide oxidoreductase family. In terms of assembly, homodimer. It depends on FAD as a cofactor. In terms of processing, the N-terminus is blocked.

It is found in the cytoplasm. The catalysed reaction is trypanothione + NADP(+) = trypanothione disulfide + NADPH + H(+). Its function is as follows. Trypanothione is the parasite analog of glutathione; this enzyme is the equivalent of glutathione reductase. This is Trypanothione reductase (TPR) from Crithidia fasciculata.